The chain runs to 98 residues: NADH-ubiquinone oxidoreductase chain 4L (98 aa).

The next 3 membrane-spanning stretches (helical) occupy residues Met1 to Met21, Ser29 to Leu49, and Ile61 to Val81.

The protein belongs to the complex I subunit 4L family. As to quaternary structure, core subunit of respiratory chain NADH dehydrogenase (Complex I) which is composed of 45 different subunits.

It localises to the mitochondrion inner membrane. It carries out the reaction a ubiquinone + NADH + 5 H(+)(in) = a ubiquinol + NAD(+) + 4 H(+)(out). In terms of biological role, core subunit of the mitochondrial membrane respiratory chain NADH dehydrogenase (Complex I) which catalyzes electron transfer from NADH through the respiratory chain, using ubiquinone as an electron acceptor. Part of the enzyme membrane arm which is embedded in the lipid bilayer and involved in proton translocation. This is NADH-ubiquinone oxidoreductase chain 4L (MT-ND4L) from Acinonyx jubatus (Cheetah).